A 294-amino-acid chain; its full sequence is sn-glycerol-3-phosphate transport system permease protein UgpA (294 aa).

Over 1 to 11 (MSPSRPGFSCS) the chain is Cytoplasmic. The chain crosses the membrane as a helical span at residues 12–32 (WLPYLLVLPQLAITAIFFLWP). Over 33 to 80 (AGEALWYSVQTLDPFGLSSEFVGLSNFIQLFQDEYYLASFYTTLIFSA) the chain is Periplasmic. In terms of domain architecture, ABC transmembrane type-1 spans 72–284 (FYTTLIFSAL…LLVIGLTVIQ (213 aa)). A helical membrane pass occupies residues 81–101 (LVAGIGLNVSLFLAAMVDYVL). Residues 102–109 (RGSRLYQT) lie on the Cytoplasmic side of the membrane. A helical transmembrane segment spans residues 110 to 130 (LLILPYAVAPAVAAVLWIFLF). The Periplasmic portion of the chain corresponds to 131 to 157 (DPGLGLITHALAKLGYSWNHAQNSGQA). A helical transmembrane segment spans residues 158–178 (MFLVVLASVWKQISYNFLFFL). At 179–207 (AALQSIPKSLVEAAAIDGAGPVRRFFNLV) the chain is on the cytoplasmic side. The chain crosses the membrane as a helical span at residues 208–228 (LPLISPVSFFLLVVNLVYAFF). Residues 229 to 262 (DTFPVIDAATGGGPVQATTTLIYKIYREGFAGLD) are Periplasmic-facing. A helical transmembrane segment spans residues 263-283 (LSSSAAQSVILMLLVIGLTVI). Over 284 to 294 (QFRFVERKVRY) the chain is Cytoplasmic.

It belongs to the binding-protein-dependent transport system permease family. UgpAE subfamily. In terms of assembly, the complex is composed of two ATP-binding proteins (UgpC), two transmembrane proteins (UgpA and UgpE) and a solute-binding protein (UgpB).

Its subcellular location is the cell inner membrane. Functionally, part of the ABC transporter complex UgpBAEC involved in sn-glycerol-3-phosphate (G3P) import. Probably responsible for the translocation of the substrate across the membrane. The chain is sn-glycerol-3-phosphate transport system permease protein UgpA (ugpA) from Yersinia pseudotuberculosis serotype I (strain IP32953).